Here is a 1025-residue protein sequence, read N- to C-terminus: Multidrug resistance protein MdtC (1025 aa).

The next 12 helical transmembrane spans lie at 15–35 (ILISLAITLCGILGFRLLPVA), 333–353 (EVEQTLVISVALVILVVFLFL), 360–380 (LIPAVAVPVSLIGTFAAMYLC), 387–407 (LSLMALTIATGFVVDDAIVVL), 431–451 (VGFTVLSMSLSLVAVFLPLLL), 469–489 (VAIGISLAVSLTLTPMMCGWL), 528–548 (LTGLVVLGTIALSVWLYISIP), 851–871 (AQVILILAAIATVYIVLGMLY), 875–895 (VHPLTILSTLPSAGVGALLAL), 897–917 (IFDAPFSLIALIGIMLLIGIV), 953–973 (PIMMTTLAALFGALPLVLSGG), and 984–1004 (ITIVGGLVMSQLLTLYTTPVV).

The protein belongs to the resistance-nodulation-cell division (RND) (TC 2.A.6) family. MdtC subfamily. In terms of assembly, part of a tripartite efflux system composed of MdtA, MdtB and MdtC. MdtC forms a heteromultimer with MdtB.

The protein resides in the cell inner membrane. This chain is Multidrug resistance protein MdtC, found in Klebsiella pneumoniae (strain 342).